A 130-amino-acid polypeptide reads, in one-letter code: Small ribosomal subunit protein uS8 (130 aa).

This sequence belongs to the universal ribosomal protein uS8 family. As to quaternary structure, part of the 30S ribosomal subunit. Contacts proteins S5 and S12.

Its function is as follows. One of the primary rRNA binding proteins, it binds directly to 16S rRNA central domain where it helps coordinate assembly of the platform of the 30S subunit. The protein is Small ribosomal subunit protein uS8 of Photobacterium profundum (strain SS9).